The chain runs to 41 residues: Antimicrobial protein PN-AMP1 (41 aa).

The residue at position 1 (glutamine 1) is a Pyrrolidone carboxylic acid. One can recognise a Chitin-binding type-1 domain in the interval 1–41; sequence QQCGRQASGRLCGNRLCCSQWGYCGSTASYCGAGCQSQCRS. Intrachain disulfides connect cysteine 3/cysteine 18, cysteine 12/cysteine 24, cysteine 17/cysteine 31, and cysteine 35/cysteine 39.

Its function is as follows. Chitin-binding protein with a defensive function against numerous chitin containing fungal pathogens. It is also an inhibitor of Gram-positive bacteria such as B.subtilis. The chain is Antimicrobial protein PN-AMP1 from Ipomoea nil (Japanese morning glory).